A 1162-amino-acid polypeptide reads, in one-letter code: Leptin receptor (1162 aa).

An N-terminal signal peptide occupies residues 1–21 (MTCQKFYVVLLHWEFLYVITA). Residues 22–839 (LNLAYPTSPW…DIAKQQNDAG (818 aa)) are Extracellular-facing. Intrachain disulfides connect Cys-37–Cys-90, Cys-89–Cys-99, Cys-131–Cys-142, Cys-186–Cys-195, and Cys-188–Cys-193. 4 N-linked (GlcNAc...) asparagine glycosylation sites follow: Asn-55, Asn-56, Asn-73, and Asn-98. N-linked (GlcNAc...) asparagine glycosylation is present at Asn-187. A Fibronectin type-III 1 domain is found at 238-331 (PPLGLRMEVT…LPQLFTTQDV (94 aa)). N-linked (GlcNAc...) asparagine glycosylation is found at Asn-275, Asn-345, and Asn-356. 2 disulfides stabilise this stretch: Cys-350/Cys-410 and Cys-411/Cys-416. An N-linked (GlcNAc...) asparagine glycan is attached at Asn-431. Cystine bridges form between Cys-434/Cys-445, Cys-471/Cys-526, and Cys-486/Cys-496. The interval 465–482 (HRRSLYCPDNPSIRPTSE) is leptin-binding. N-linked (GlcNAc...) asparagine glycosylation is found at Asn-514, Asn-622, Asn-657, Asn-668, Asn-686, Asn-695, Asn-698, and Asn-726. 3 Fibronectin type-III domains span residues 537–632 (PPSN…TLVM), 637–729 (PMRG…NLTF), and 738–831 (AVQS…KDDI). The short motif at 620-624 (WSNWS) is the WSXWS motif element. A helical membrane pass occupies residues 840–860 (LYVIVPIIISSCVLLLGTLLI). The Cytoplasmic portion of the chain corresponds to 861-1162 (SHQRMKKLFW…IENKMCDLTV (302 aa)). The short motif at 869 to 877 (FWDDVPNPK) is the Box 1 motif element. Position 880 is a phosphoserine (Ser-880). The interval 891-896 (ETFEHL) is required for JAK2 activation. The segment at 896 to 904 (LFTKHAESV) is required for STAT3 phosphorylation. Phosphotyrosine; by JAK2 is present on Tyr-985. Phosphotyrosine is present on Tyr-1077. Residue Tyr-1138 is modified to Phosphotyrosine; by JAK2.

This sequence belongs to the type I cytokine receptor family. Type 2 subfamily. In terms of assembly, present as a mixture of monomers and dimers. The phosphorylated receptor binds a number of SH2 domain-containing proteins such as JAK2, STAT3, PTPN11, and SOCS3. Interaction with SOCS3 inhibits JAK/STAT signaling and MAPK cascade. Post-translationally, on ligand binding, phosphorylated on two conserved C-terminal tyrosine residues (isoform B only) by JAK2. Tyr-985 is required for complete binding and activation of PTPN11, ERK/FOS activation,for interaction with SOCS3 and SOCS3 mediated inhibition of leptin signaling. Phosphorylation on Tyr-1138 is required for STAT3 binding/activation. Phosphorylation of Tyr-1077 has a more accessory role. As to expression, isoform B is expressed in kidney, liver, lung, ovary, spleen and uterus. Increased level in uterus during gestation. Isoform A and isoform C are predominantly expressed in cerebral microvessels and choroid plexus, with lower levels in cortex, cerebellum and hypothalamus but also liver and lung. Isoform F is expressed at high levels in brain, liver and spleen and less in stomach, kidney, thymus, heart, lung and hypothalamus.

It localises to the cell membrane. The protein localises to the basolateral cell membrane. It is found in the secreted. In terms of biological role, receptor for hormone LEP/leptin. On ligand binding, mediates LEP central and peripheral effects through the activation of different signaling pathways such as JAK2/STAT3 and MAPK cascade/FOS. In the hypothalamus, LEP acts as an appetite-regulating factor that induces a decrease in food intake and an increase in energy consumption by inducing anorexinogenic factors and suppressing orexigenic neuropeptides, also regulates bone mass and secretion of hypothalamo-pituitary-adrenal hormones. In the periphery, increases basal metabolism, influences reproductive function, regulates pancreatic beta-cell function and insulin secretion, is pro-angiogenic and affects innate and adaptive immunity. Control of energy homeostasis and melanocortin production (stimulation of POMC and full repression of AgRP transcription) is mediated by STAT3 signaling, whereas distinct signals regulate NPY and the control of fertility, growth and glucose homeostasis. Involved in the regulation of counter-regulatory response to hypoglycemia by inhibiting neurons of the parabrachial nucleus. Has a specific effect on T lymphocyte responses, differentially regulating the proliferation of naive and memory T-cells. Leptin increases Th1 and suppresses Th2 cytokine production. May transport LEP across the blood-brain barrier. Binds LEP and mediates LEP endocytosis. Does not induce phosphorylation of and activate STAT3. Functionally, antagonizes Isoform A and isoform B-mediated LEP binding and endocytosis. The chain is Leptin receptor (Lepr) from Rattus norvegicus (Rat).